A 269-amino-acid chain; its full sequence is Dynein regulatory complex protein 8 (269 aa).

Residues 1–113 (MLGPGQVRLR…RTGKGLGYNS (113 aa)) are disordered. Low complexity predominate over residues 54 to 76 (AQGSSSPGIQSGPSSRPGSPRGA). 2 EF-hand domains span residues 150–185 (EFHK…LGCC) and 228–263 (IPED…EDGV).

The protein belongs to the DRC8 family. In terms of assembly, component of the nexin-dynein regulatory complex (N-DRC).

Its subcellular location is the cytoplasm. The protein resides in the cytoskeleton. The protein localises to the flagellum axoneme. In terms of biological role, component of the nexin-dynein regulatory complex (N-DRC), a key regulator of ciliary/flagellar motility which maintains the alignment and integrity of the distal axoneme and regulates microtubule sliding in motile axonemes. The chain is Dynein regulatory complex protein 8 (EFCAB2) from Homo sapiens (Human).